A 933-amino-acid chain; its full sequence is 2-oxoglutarate dehydrogenase E1 component (933 aa).

It belongs to the alpha-ketoglutarate dehydrogenase family. In terms of assembly, homodimer. Part of the 2-oxoglutarate dehydrogenase (OGDH) complex composed of E1 (2-oxoglutarate dehydrogenase), E2 (dihydrolipoamide succinyltransferase) and E3 (dihydrolipoamide dehydrogenase); the complex contains multiple copies of the three enzymatic components (E1, E2 and E3). Interacts (via N-terminus) with SucB, the E2 component of OGDH complex. The cofactor is thiamine diphosphate.

The catalysed reaction is N(6)-[(R)-lipoyl]-L-lysyl-[protein] + 2-oxoglutarate + H(+) = N(6)-[(R)-S(8)-succinyldihydrolipoyl]-L-lysyl-[protein] + CO2. E1 component of the 2-oxoglutarate dehydrogenase (OGDH) complex which catalyzes the decarboxylation of 2-oxoglutarate, the first step in the conversion of 2-oxoglutarate to succinyl-CoA and CO(2). This is 2-oxoglutarate dehydrogenase E1 component (sucA) from Escherichia coli O157:H7.